Here is a 237-residue protein sequence, read N- to C-terminus: Ribose-5-phosphate isomerase A (237 aa).

Substrate is bound by residues 28-31, 83-86, and 97-100; these read SGST, DGAD, and KGRG. Glu106 serves as the catalytic Proton acceptor. Lys124 is a binding site for substrate.

Belongs to the ribose 5-phosphate isomerase family. As to quaternary structure, homodimer.

It catalyses the reaction aldehydo-D-ribose 5-phosphate = D-ribulose 5-phosphate. The protein operates within carbohydrate degradation; pentose phosphate pathway; D-ribose 5-phosphate from D-ribulose 5-phosphate (non-oxidative stage): step 1/1. Catalyzes the reversible conversion of ribose-5-phosphate to ribulose 5-phosphate. In Thermomicrobium roseum (strain ATCC 27502 / DSM 5159 / P-2), this protein is Ribose-5-phosphate isomerase A.